The chain runs to 255 residues: RNA polymerase sigma-F factor (255 aa).

Positions 61–74 (DLFQIGCIGLLKSV) match the Polymerase core binding motif. Positions 221-240 (QSEVADRLGISQVQVSRLEK) form a DNA-binding region, H-T-H motif.

This sequence belongs to the sigma-70 factor family.

Its function is as follows. Sigma factors are initiation factors that promote the attachment of RNA polymerase to specific initiation sites and are then released. This sigma factor is responsible for the expression of sporulation specific genes. This Bacillus licheniformis protein is RNA polymerase sigma-F factor (sigF).